A 92-amino-acid chain; its full sequence is Small ribosomal subunit protein uS19 (92 aa).

Belongs to the universal ribosomal protein uS19 family.

Protein S19 forms a complex with S13 that binds strongly to the 16S ribosomal RNA. The protein is Small ribosomal subunit protein uS19 of Shewanella amazonensis (strain ATCC BAA-1098 / SB2B).